The chain runs to 449 residues: MVELWQGLGCVFTPEKLLKFITTLTSNSNFCIAYSGGIDSHVLVHAMSHLCQEHPWQLRALHINHGLNPKANDWENHCQQICNRLKIPFQSERVTLSLQPGDSIEAVARKARYAIFQQALSENETLLTAHTENDQAETFLLQLLRGAGVKGLSAMPAKRKLGKGELVRPLLAITRDDLKKYAEKNNLRWVEDDTNLELRFNRNYLRHEVLPILRRRWPEVFAVISRSANHCAEAALLLDQLAESDLQLIQKDSELEILPLLQLTPERQRNVLRRWIYLHGFQLPQTKQLEQIRNDVLLAAHDANPVFSYHTIEIRRHHGKLYLSNALSAHNATPLISWNFSRSLPLPGDLGTLIAEKKKGVGIKTTLDTSKITVRFRQGGEQCQPAGRKETHTLKKLMQEWKIPVWQRDRVPLIYLGDKLIAVVGYCICEGFEAKGEEWGWNVEVQPPK.

35–40 (SGGIDS) serves as a coordination point for ATP.

Belongs to the tRNA(Ile)-lysidine synthase family.

It localises to the cytoplasm. The enzyme catalyses cytidine(34) in tRNA(Ile2) + L-lysine + ATP = lysidine(34) in tRNA(Ile2) + AMP + diphosphate + H(+). Ligates lysine onto the cytidine present at position 34 of the AUA codon-specific tRNA(Ile) that contains the anticodon CAU, in an ATP-dependent manner. Cytidine is converted to lysidine, thus changing the amino acid specificity of the tRNA from methionine to isoleucine. In Coxiella burnetii (strain RSA 493 / Nine Mile phase I), this protein is tRNA(Ile)-lysidine synthase.